The chain runs to 561 residues: Asparagine synthetase [glutamine-hydrolyzing] (561 aa).

Cys2 serves as the catalytic For GATase activity. Positions 2–191 (CGIWALFGSD…PGHYEVLDLK (190 aa)) constitute a Glutamine amidotransferase type-2 domain. L-glutamine contacts are provided by residues 49–53 (RLAVV), 75–77 (NGE), and Asp97. In terms of domain architecture, Asparagine synthetase spans 213 to 536 (HALYDSVEKL…PGRADWLTHY (324 aa)). ATP contacts are provided by residues Leu256, Ile288, and 363-364 (SG). Lys385 is modified (N6-acetyllysine). The residue at position 545 (Thr545) is a Phosphothreonine. Ser557 bears the Phosphoserine mark.

The enzyme catalyses L-aspartate + L-glutamine + ATP + H2O = L-asparagine + L-glutamate + AMP + diphosphate + H(+). It participates in amino-acid biosynthesis; L-asparagine biosynthesis; L-asparagine from L-aspartate (L-Gln route): step 1/1. This chain is Asparagine synthetase [glutamine-hydrolyzing] (ASNS), found in Mesocricetus auratus (Golden hamster).